Consider the following 299-residue polypeptide: Taste receptor type 2 member 4 (299 aa).

At M1 to A9 the chain is on the extracellular side. The chain crosses the membrane as a helical span at residues I10–V30. At N31 to R46 the chain is on the cytoplasmic side. The helical transmembrane segment at I47 to I67 threads the bilayer. Over Y68–S81 the chain is Extracellular. The chain crosses the membrane as a helical span at residues A82–L102. The Cytoplasmic portion of the chain corresponds to N103–R131. The chain crosses the membrane as a helical span at residues L132–Q152. Topologically, residues A153 to E172 are extracellular. 3 N-linked (GlcNAc...) asparagine glycosylation sites follow: N164, N165, and N169. A helical transmembrane segment spans residues G173–V193. Topologically, residues T194–K230 are cytoplasmic. A helical membrane pass occupies residues L231–L251. The Extracellular portion of the chain corresponds to P252–K262. The chain crosses the membrane as a helical span at residues S263 to T283. At H284–K299 the chain is on the cytoplasmic side.

Belongs to the G-protein coupled receptor T2R family. Expressed in subsets of taste receptor cells of the tongue and palate epithelium and exclusively in gustducin-positive cells. Expressed on airway ciliated epithelium.

The protein resides in the membrane. The protein localises to the cell projection. Its subcellular location is the cilium membrane. In terms of biological role, gustducin-coupled receptor for denatonium and N(6)-propyl-2-thiouracil implicated in the perception of bitter compounds in the oral cavity and the gastrointestinal tract. Signals through PLCB2 and the calcium-regulated cation channel TRPM5. In airway epithelial cells, binding of denatonium increases the intracellular calcium ion concentration and stimulates ciliary beat frequency. The sequence is that of Taste receptor type 2 member 4 (TAS2R4) from Homo sapiens (Human).